The following is a 903-amino-acid chain: E3 ubiquitin-protein ligase DDB_G0292642 (903 aa).

Disordered regions lie at residues 115–137, 167–236, 284–366, 415–487, and 549–576; these read FTLP…SSSD, LLKR…VIGS, VNKT…NNLK, TPSL…TTEI, and DDSE…GSEG. Composition is skewed to low complexity over residues 120-130 and 178-216; these read TTNNNNNNTTN and TTTT…TIDT. Residues 217-232 are compositionally biased toward acidic residues; sequence SSEDDDESISSSDDDI. 2 stretches are compositionally biased toward low complexity: residues 287–301 and 311–323; these read TSTT…TTTT and NRNN…NNNN. Residues 313-352 are a coiled coil; it reads NNNNNNNNNNNKRFEIESEEESETDISSEEEENNNNNNNN. Acidic residues predominate over residues 329–345; that stretch reads ESEEESETDISSEEEEN. Positions 346–364 are enriched in low complexity; the sequence is NNNNNNNSNNNNNSNNNNN. Over residues 415 to 427 the composition is skewed to polar residues; it reads TPSLRLSSAHLPN. The segment covering 428 to 443 has biased composition (low complexity); it reads TTTTTTTTTTTTTTTT. Composition is skewed to acidic residues over residues 451–466 and 549–568; these read NDDD…DSEI and DDSE…ESDS. The stretch at 542–569 forms a coiled coil; sequence AELVFEYDDSEEEEEEEEEEEGEESDSE. The tract at residues 612–832 is TRIAD supradomain; that stretch reads EPVECKICYM…NEYPECFDRQ (221 aa). 18 residues coordinate Zn(2+): C616, C619, C634, H636, C639, C642, C661, C666, C704, C709, C725, C728, C733, C736, H741, C746, C782, and C785. The RING-type 1 zinc-finger motif lies at 616 to 666; the sequence is CKICYMEYDQSNEVFTLECDHVYCFDCITEHLRILITEGRVLDISCPHPQC. Residues 683-746 form an IBR-type zinc finger; it reads NWLKYQKFSM…GEYSHEGAKC (64 aa). An RING-type 2; atypical zinc finger spans residues 782–811; sequence CPTCKSHIEKHDGCNHMTCINCQHQFCWLC. C795 is a catalytic residue. 6 residues coordinate Zn(2+): C800, C803, C808, C811, H819, and C828. The helical transmembrane segment at 864 to 884 threads the bilayer; that stretch reads TAAFTVGAPLLLIGGAVLLCV.

Belongs to the RBR family. RNF14 subfamily.

Its subcellular location is the membrane. The catalysed reaction is [E2 ubiquitin-conjugating enzyme]-S-ubiquitinyl-L-cysteine + [acceptor protein]-L-lysine = [E2 ubiquitin-conjugating enzyme]-L-cysteine + [acceptor protein]-N(6)-ubiquitinyl-L-lysine.. It functions in the pathway protein modification; protein ubiquitination. Its function is as follows. E3 ubiquitin-protein ligase. The chain is E3 ubiquitin-protein ligase DDB_G0292642 from Dictyostelium discoideum (Social amoeba).